The primary structure comprises 520 residues: MKISDFCFASANDGSYTLKAFSELNEYKDVVKLVSDEKIGVGFHCYNLGLMNIVEDFSGNLDNESYLTSKVGKRMASELVTAYSKFGSTSSRTLHSSLNLPVVNITSLPTSQAKDLKPNHSLDDKGSMLRTQIHSILTGNGPLTIKRRIDAFYYSASSIFTRHMTSKYANPGSNVPQRFSFIPDCAMNKKPTLFLENRDNELQDSMTIMLMLGQVFSDALTYYLNASILYGILGRIESKVQVDLPAITLESVHVTNNLEISPAAFALIASVWLDKAEILSKLNAIDFIVSPEDNEDRISNLLKLMLPVQSNNITVEKSDTRFSVTHSDGFMRYYMCFSKHEFDYGDHLESFGIPVLRVRLGKPISNELNKPMLVMFKKHESISSINVRYQVRGGSIPKFRTSEFRRDIGMLVANSRFMATDITLILSTFYPFTQETDKLFIEQHIKEIFLDMYPWIDKLTSADAKSEVNISYGNLVLYSYGELVKNSIFIAMMDNCKDARNSFSRADMREIQAFVAAFTQ.

The sequence is that of Non-structural protein PNS7 (S6) from Catharanthus roseus (Madagascar periwinkle).